The primary structure comprises 412 residues: Protein arginine N-methyltransferase 2 (412 aa).

Positions 48–65 are enriched in basic and acidic residues; sequence EKNRNGDKEFRESTDDNK. Disordered stretches follow at residues 48 to 69 and 169 to 189; these read EKNR…TSNT and SVQT…DDAT. Residues serine 181 and serine 184 each carry the phosphoserine modification. The RMT2 domain occupies 189–412; the sequence is TAANQQVYLK…YYYHPRITFA (224 aa). Residues tyrosine 196, methionine 226, 250–255, 271–273, 298–299, and aspartate 319 each bind S-adenosyl-L-methionine; these read FGMGII, EAH, and WQ.

The protein belongs to the class I-like SAM-binding methyltransferase superfamily. RMT2 methyltransferase family. As to quaternary structure, monomer. Interacts with nucleoporins NUP49, NUP57 and NUP100.

The protein resides in the cytoplasm. It localises to the nucleus. In terms of biological role, S-adenosyl-L-methionine-dependent protein-arginine N-methyltransferase that methylates the delta-nitrogen atom of arginine residues to form N5-methylarginine (type IV) in target proteins. Monomethylates ribosomal protein L12 (RPL12A/RPL12B) at 'Arg-67'. This is Protein arginine N-methyltransferase 2 from Saccharomyces cerevisiae (strain ATCC 204508 / S288c) (Baker's yeast).